Consider the following 209-residue polypeptide: Ribosomal RNA large subunit methyltransferase E (209 aa).

Residues G63, W65, D83, D99, and D124 each coordinate S-adenosyl-L-methionine. K164 functions as the Proton acceptor in the catalytic mechanism.

This sequence belongs to the class I-like SAM-binding methyltransferase superfamily. RNA methyltransferase RlmE family.

Its subcellular location is the cytoplasm. The catalysed reaction is uridine(2552) in 23S rRNA + S-adenosyl-L-methionine = 2'-O-methyluridine(2552) in 23S rRNA + S-adenosyl-L-homocysteine + H(+). In terms of biological role, specifically methylates the uridine in position 2552 of 23S rRNA at the 2'-O position of the ribose in the fully assembled 50S ribosomal subunit. This chain is Ribosomal RNA large subunit methyltransferase E, found in Cronobacter sakazakii (strain ATCC BAA-894) (Enterobacter sakazakii).